The following is a 314-amino-acid chain: Methionyl-tRNA formyltransferase (314 aa).

113-116 lines the (6S)-5,6,7,8-tetrahydrofolate pocket; that stretch reads SLLP.

This sequence belongs to the Fmt family.

It carries out the reaction L-methionyl-tRNA(fMet) + (6R)-10-formyltetrahydrofolate = N-formyl-L-methionyl-tRNA(fMet) + (6S)-5,6,7,8-tetrahydrofolate + H(+). Functionally, attaches a formyl group to the free amino group of methionyl-tRNA(fMet). The formyl group appears to play a dual role in the initiator identity of N-formylmethionyl-tRNA by promoting its recognition by IF2 and preventing the misappropriation of this tRNA by the elongation apparatus. The protein is Methionyl-tRNA formyltransferase of Pseudomonas syringae pv. syringae (strain B728a).